Consider the following 434-residue polypeptide: Histidinol dehydrogenase (434 aa).

Residues tyrosine 130, glutamine 192, and asparagine 215 each contribute to the NAD(+) site. Serine 238, glutamine 260, and histidine 263 together coordinate substrate. Zn(2+) contacts are provided by glutamine 260 and histidine 263. Residues glutamate 328 and histidine 329 each act as proton acceptor in the active site. Substrate contacts are provided by histidine 329, aspartate 362, glutamate 416, and histidine 421. Aspartate 362 is a binding site for Zn(2+). Position 421 (histidine 421) interacts with Zn(2+).

The protein belongs to the histidinol dehydrogenase family. Requires Zn(2+) as cofactor.

The catalysed reaction is L-histidinol + 2 NAD(+) + H2O = L-histidine + 2 NADH + 3 H(+). The protein operates within amino-acid biosynthesis; L-histidine biosynthesis; L-histidine from 5-phospho-alpha-D-ribose 1-diphosphate: step 9/9. Catalyzes the sequential NAD-dependent oxidations of L-histidinol to L-histidinaldehyde and then to L-histidine. The chain is Histidinol dehydrogenase from Synechococcus sp. (strain ATCC 27144 / PCC 6301 / SAUG 1402/1) (Anacystis nidulans).